A 1675-amino-acid polypeptide reads, in one-letter code: Clathrin heavy chain 1 (1675 aa).

Residue Ala2 is modified to N-acetylalanine. The segment at 2-479 is globular terminal domain; the sequence is AQILPIRFQE…VDPTLALSVY (478 aa). WD40-like repeat stretches follow at residues 24–67, 68–107, 108–149, 150–195, 196–257, 258–301, and 302–330; these read NIGF…RPIS, ADSA…MTDD, VTFW…SSLA, GCQI…QPIE, GHAA…PEAQ, NDFP…ISGE, and TIFV…VCVE. Position 67 is a phosphoserine (Ser67). A Phosphothreonine modification is found at Thr105. Phosphotyrosine is present on Tyr184. Thr394 carries the post-translational modification Phosphothreonine. Residues 449–465 form a binding site for the uncoating ATPase, involved in lattice disassembly region; that stretch reads EKWLKEDKLECSEELGD. The flexible linker stretch occupies residues 480 to 523; sequence LRANVPNKVIQCFAETGQVQKIVLYAKKVGYTPDWIFLLRNVMR. Positions 524-634 are distal segment; it reads ISPDQGQQFA…RALEHFTDLY (111 aa). Positions 524-1675 are heavy chain arm; it reads ISPDQGQQFA…QPQPGFGYSM (1152 aa). CHCR repeat units lie at residues 537 to 683, 686 to 828, 833 to 972, 979 to 1124, 1128 to 1269, 1274 to 1420, and 1423 to 1566; these read VQDE…QICV, ASKY…SEDV, ILVV…PLID, LSET…VKEA, YIKA…FRLA, LHIV…LLLN, and LMVL…RECF. The residue at position 634 (Tyr634) is a Phosphotyrosine. A proximal segment region spans residues 639–1675; the sequence is AVVHTHLLNP…QPQPGFGYSM (1037 aa). Lys737 carries the post-translational modification N6-succinyllysine. An N6-acetyllysine modification is found at Lys856. Tyr899 bears the Phosphotyrosine mark. Position 1167 is a phosphoserine (Ser1167). Tyr1206 bears the Phosphotyrosine mark. The segment at 1213-1522 is involved in binding clathrin light chain; sequence AAKLLYNNVS…YLFKGNNRWK (310 aa). Phosphoserine is present on Ser1229. The residue at position 1441 (Lys1441) is an N6-acetyllysine; alternate. Position 1441 is an N6-succinyllysine; alternate (Lys1441). Phosphotyrosine is present on residues Tyr1477 and Tyr1487. Ser1494 is subject to Phosphoserine. Lys1501 is subject to N6-acetyllysine. Residues 1550 to 1675 form a trimerization region; the sequence is AEELLQWFLQ…QPQPGFGYSM (126 aa).

Belongs to the clathrin heavy chain family. Clathrin triskelions, composed of 3 heavy chains and 3 light chains, are the basic subunits of the clathrin coat. In the presence of light chains, hub assembly is influenced by both the pH and the concentration of calcium. Interacts with HIP1. Interacts with DENND1A, DENND1B and DENND1C. Interacts with OCRL. Interacts with ERBB2. Interacts with FKBP6. Interacts with CKAP5 and TACC3 forming the TACC3/ch-TOG/clathrin complex located at spindle inter-microtubules bridges; the complex implicates clathrin triskelions; TACC3 and CLTC are proposed to form a composite microtubule interaction surface. Interacts with ATG16L1 (via N-terminus). Interacts with RFTN1; the interaction occurs in response to pathogens. Interacts with TMEM106B (via N-terminus). Interacts with DNAJC6; this interaction produces a local change in heavy-chain contacts, creating a detectable global distortion of the clathrin coat and leads to the recruitment of HSPA8.

The protein localises to the cytoplasmic vesicle membrane. The protein resides in the membrane. It localises to the coated pit. It is found in the melanosome. Its subcellular location is the cytoplasm. The protein localises to the cytoskeleton. The protein resides in the spindle. Functionally, clathrin is the major protein of the polyhedral coat of coated pits and vesicles. Two different adapter protein complexes link the clathrin lattice either to the plasma membrane or to the trans-Golgi network. Acts as a component of the TACC3/ch-TOG/clathrin complex proposed to contribute to stabilization of kinetochore fibers of the mitotic spindle by acting as inter-microtubule bridge. The TACC3/ch-TOG/clathrin complex is required for the maintenance of kinetochore fiber tension. Plays a role in early autophagosome formation. Interaction with DNAJC6 mediates the recruitment of HSPA8 to the clathrin lattice and creates local destabilization of the lattice promoting uncoating. The protein is Clathrin heavy chain 1 of Bos taurus (Bovine).